A 349-amino-acid chain; its full sequence is Hydroxymethylglutaryl-CoA synthase (349 aa).

2 residues coordinate (3S)-3-hydroxy-3-methylglutaryl-CoA: Asp-29 and Ala-30. Glu-81 acts as the Proton donor/acceptor in catalysis. Residues Cys-113 and Thr-154 each coordinate (3S)-3-hydroxy-3-methylglutaryl-CoA. The active-site Acyl-thioester intermediate is Cys-113. Arg-202 serves as a coordination point for CoA. Positions 204 and 237 each coordinate (3S)-3-hydroxy-3-methylglutaryl-CoA. The active-site Proton donor/acceptor is the His-237. Lys-242 is a binding site for CoA. 3 residues coordinate (3S)-3-hydroxy-3-methylglutaryl-CoA: Arg-246, Asn-269, and Ser-299.

Belongs to the thiolase-like superfamily. Archaeal HMG-CoA synthase family. As to quaternary structure, interacts with acetoacetyl-CoA thiolase that catalyzes the precedent step in the pathway and with a DUF35 protein. The acetoacetyl-CoA thiolase/HMG-CoA synthase complex channels the intermediate via a fused CoA-binding site, which allows for efficient coupling of the endergonic thiolase reaction with the exergonic HMGCS reaction.

The catalysed reaction is acetoacetyl-CoA + acetyl-CoA + H2O = (3S)-3-hydroxy-3-methylglutaryl-CoA + CoA + H(+). It functions in the pathway metabolic intermediate biosynthesis; (R)-mevalonate biosynthesis; (R)-mevalonate from acetyl-CoA: step 2/3. Catalyzes the condensation of acetyl-CoA with acetoacetyl-CoA to form 3-hydroxy-3-methylglutaryl-CoA (HMG-CoA). Functions in the mevalonate (MVA) pathway leading to isopentenyl diphosphate (IPP), a key precursor for the biosynthesis of isoprenoid compounds that are building blocks of archaeal membrane lipids. The sequence is that of Hydroxymethylglutaryl-CoA synthase from Methanococcoides burtonii (strain DSM 6242 / NBRC 107633 / OCM 468 / ACE-M).